A 380-amino-acid polypeptide reads, in one-letter code: G-protein coupled receptor (380 aa).

The next 7 helical transmembrane spans lie at 26–46 (VISIFSLTTFVGLAITLYLGI), 60–80 (LVCCDVLIVNAVCLITLPLWV), 97–117 (FAGMFYTMNVYMSVWSCVIVT), 145–165 (VTILTLLVTFIGLFSLTETSI), 184–204 (AALGYTVPWLAIAIMIVHIIL), 220–240 (ILMWMMFTLLVTQGPYYSLSA), and 275–295 (VAMLVCTHALAITRMFSVPLI). The cysteines at positions 95 and 170 are disulfide-linked. Positions 328 to 380 (SQSKLLRGEENPNYDYSPKSVRIKPLKSPGGGDNSSLKDEGYDEESQNGFSIG) are disordered.

Belongs to the G-protein coupled receptor 1 family.

It localises to the host membrane. The sequence is that of G-protein coupled receptor from Elephas maximus (Indian elephant).